The primary structure comprises 252 residues: MFKVVICDDERIIREGLKQIIPWGDYHFNTIYTAKDGVEALSLIQQHQPELVITDIRMPRKNGVDLLNDIAHLDCNVIILSSYDDFEYMKAGIQHHVLDYLLKPVDHAQLEVILGRLVRTLLEQQSQNGRSLASCHDAFQPLLKVEYDDYYVNQIVDQIKQSYQTKVTVSDLIQHIDVSESYAMRTFKDHVGITIVDYLNRYRILQSLQLLDRHYKHYEIADKVGFSEYKMFSYHFKKYLQMSPSDYCKQAK.

Residues 3–118 (KVVICDDERI…QLEVILGRLV (116 aa)) form the Response regulatory domain. Asp-55 carries the 4-aspartylphosphate modification. Residues 153 to 250 (NQIVDQIKQS…QMSPSDYCKQ (98 aa)) enclose the HTH araC/xylS-type domain. 2 DNA-binding regions (H-T-H motif) span residues 170–191 (SDLI…KDHV) and 217–240 (HYEI…KKYL).

In terms of processing, phosphorylated by HptS.

It is found in the cytoplasm. Member of the two-component regulatory system HptS/HptR that regulates genes involved in hexose phosphate transport system in response to changes in extracellular phosphate sources. Activates uhpT expression to facilitate glucose-6-phosphate/G6P utilization by directly binding to its promoter. Antagonizes CcpA-dependent transcription of a subset of CcpA-regulated genes involved in antibiotic susceptibility. The sequence is that of Transcriptional regulatory protein HptR (hptR) from Staphylococcus aureus (strain NCTC 8325 / PS 47).